A 758-amino-acid polypeptide reads, in one-letter code: Probable C-mannosyltransferase DPY19L2 (758 aa).

The tract at residues 1-58 (MRKQGVSSKRLQSSGRSQSKGRRGASLAREPEVEEEMEKSALGGGKLPRGSWRSSPGR) is disordered. Over 1–107 (MRKQGVSSKR…ELQARRFSSR (107 aa)) the chain is Nuclear. Positions 7-18 (SSKRLQSSGRSQ) are enriched in low complexity. Residues 108–128 (TTLGIAVFVAILHWLHLVTLF) form a helical membrane-spanning segment. Over 129-194 (ENDRHFSHLS…INAIKRFHLY (66 aa)) the chain is Perinuclear space. Residues 195–215 (PEVIIASWYCTFMGIMNLFGL) form a helical membrane-spanning segment. The Nuclear segment spans residues 216-241 (ETKTCWNVTRIEPLNEVQSCEGLGDP). The next 2 membrane-spanning stretches (helical) occupy residues 242-262 (ACFYVGVIFILNGLMMGLFFM) and 263-283 (YGAYLSGTQLGGLITVLCFFF). The Nuclear segment spans residues 284-296 (NHGEATRVMWTPP). The chain crosses the membrane as a helical span at residues 297–317 (LRESFSYPFLVLQMCILTLIL). Residues 318-343 (RTSSNDRRPFIALCLSNVAFMLPWQF) lie on the Perinuclear space side of the membrane. Residues 344–364 (AQFILFTQIASLFPMYVVGYI) traverse the membrane as a helical segment. Residues 365–371 (EPSKFQK) are Nuclear-facing. The chain crosses the membrane as a helical span at residues 372–392 (IIYMNMISVTLSFILMFGNSM). The Perinuclear space segment spans residues 393–422 (YLSSYYSSSLLMTWAIILKRNEIQKLGVSK). Residues 423 to 443 (LNFWLIQGSAWWCGTIILKFL) traverse the membrane as a helical segment. The Nuclear segment spans residues 444–488 (TSKILGVSDHIRLSDLIAARILRYTDFDTLIYTCAPEFDFMEKAT). Residues 489-509 (PLRYTKTLLLPVVMVITCFIF) traverse the membrane as a helical segment. At 510-533 (KKTVRDISYVLATNIYLRKQLLEH) the chain is on the perinuclear space side. Residues 534–554 (SELAFHTLQLLVFTALAILIM) traverse the membrane as a helical segment. Topologically, residues 555-758 (RLKMFLTPHM…NSVYRVLKVN (204 aa)) are nuclear.

The protein belongs to the dpy-19 family. Interacts with FAM209. As to expression, widely expressed with high expression in testis. Not detectable in ejaculated sperm (at protein level).

It localises to the nucleus inner membrane. Probable C-mannosyltransferase that mediates C-mannosylation of tryptophan residues on target proteins. In terms of biological role, required during spermatogenesis for sperm head elongation and acrosome formation. Also plays a role in acrosome attachment to the nuclear envelope. This Homo sapiens (Human) protein is Probable C-mannosyltransferase DPY19L2.